Reading from the N-terminus, the 150-residue chain is uncharacterized protein (150 aa).

The Flavodoxin-like domain occupies V3–A145.

This sequence belongs to the flavodoxin family. MioC subfamily. The cofactor is FMN.

In terms of biological role, probable electron transporter. This is an uncharacterized protein from Pseudomonas aeruginosa (strain ATCC 15692 / DSM 22644 / CIP 104116 / JCM 14847 / LMG 12228 / 1C / PRS 101 / PAO1).